Here is a 139-residue protein sequence, read N- to C-terminus: MVKAVCVLKGTTGEVTGTVYFEQESDSAPVKLTGQIIGLAPGLHGFHVHAFGDNTNXXXXXXXXXXXXXXTHAGPTDKDRHVGDLGNVAKIDITDKMLTLNGPLSIIGRTMVIHEKADDLGKGGNDESLKTGNAGGRMA.

The S-palmitoyl cysteine moiety is linked to residue Cys-6. Cu cation-binding residues include His-47 and His-49. Zn(2+) contacts are provided by His-72, His-81, and Asp-84. A Cu cation-binding site is contributed by His-114. The span at 118–129 (DDLGKGGNDESL) shows a compositional bias: basic and acidic residues. The interval 118-139 (DDLGKGGNDESLKTGNAGGRMA) is disordered.

The protein belongs to the Cu-Zn superoxide dismutase family. Homodimer. It depends on Cu cation as a cofactor. Requires Zn(2+) as cofactor.

It localises to the cytoplasm. The protein localises to the nucleus. It catalyses the reaction 2 superoxide + 2 H(+) = H2O2 + O2. Functionally, destroys radicals which are normally produced within the cells and which are toxic to biological systems. The protein is Superoxide dismutase [Cu-Zn] (sod1) of Lampanyctus crocodilus (Jewel lanternfish).